The chain runs to 526 residues: CTP synthase (526 aa).

Positions 1 to 270 (MKYIFVTGGV…ADVLSTHLGL (270 aa)) are amidoligase domain. Ser-12 contributes to the CTP binding site. Ser-12 contributes to the UTP binding site. Residues 13–18 (GLGKGI) and Asp-70 each bind ATP. Mg(2+) contacts are provided by Asp-70 and Glu-145. CTP is bound by residues 152–154 (DIE), 191–196 (KTKPTQ), and Lys-227. Residues 191-196 (KTKPTQ) and Lys-227 contribute to the UTP site. Positions 293-525 (VAIVSKYGIE…VEACRANKRT (233 aa)) constitute a Glutamine amidotransferase type-1 domain. Gly-349 contributes to the L-glutamine binding site. Cys-376 serves as the catalytic Nucleophile; for glutamine hydrolysis. Residues 377–380 (LGFQ), Glu-400, and Arg-455 each bind L-glutamine. Residues His-498 and Glu-500 contribute to the active site.

This sequence belongs to the CTP synthase family. As to quaternary structure, homotetramer.

It catalyses the reaction UTP + L-glutamine + ATP + H2O = CTP + L-glutamate + ADP + phosphate + 2 H(+). The catalysed reaction is L-glutamine + H2O = L-glutamate + NH4(+). The enzyme catalyses UTP + NH4(+) + ATP = CTP + ADP + phosphate + 2 H(+). The protein operates within pyrimidine metabolism; CTP biosynthesis via de novo pathway; CTP from UDP: step 2/2. Its activity is regulated as follows. Allosterically activated by GTP, when glutamine is the substrate; GTP has no effect on the reaction when ammonia is the substrate. The allosteric effector GTP functions by stabilizing the protein conformation that binds the tetrahedral intermediate(s) formed during glutamine hydrolysis. Inhibited by the product CTP, via allosteric rather than competitive inhibition. Its function is as follows. Catalyzes the ATP-dependent amination of UTP to CTP with either L-glutamine or ammonia as the source of nitrogen. Regulates intracellular CTP levels through interactions with the four ribonucleotide triphosphates. The chain is CTP synthase from Methanoregula boonei (strain DSM 21154 / JCM 14090 / 6A8).